Reading from the N-terminus, the 267-residue chain is Lectin SfL-2 (267 aa).

4 tandem repeats follow at residues 1–67 (GRYT…RRGE), 68–135 (SNNY…QAEG), 136–202 (DTYN…LTGA), and 203–267 (NNYK…GVAN). The 4 X approximate tandem repeats stretch occupies residues 1 to 267 (GRYTVQNQWG…GPIGFKGVAN (267 aa)).

Monomer.

Lectin specific for high mannose N-glycans, recognizes the branched moiety of these glycans. Does not recognize other types of N-glycans or monosaccharides. The sequence is that of Lectin SfL-2 from Solieria filiformis (Red alga).